A 212-amino-acid chain; its full sequence is F-box protein GID2 (212 aa).

A disordered region spans residues 1-74 (MKFRSDSSGG…AGEGEQPRVP (74 aa)). Low complexity predominate over residues 35–59 (DPSSSSSQGEASSSSQPPPQQQQEE). The F-box domain occupies 70–116 (QPRVPDLGEDLVFEVLRRAEARTLAAAACVSRGWRQLAEDERLWEAA).

As to quaternary structure, part of some SCF(GID2) complex, which consist of a SKP1 protein, CUL1, GID2 and some RING box protein. Interacts directly with SKP2 and SKP15. Interacts directly with DELLA protein SLR1. May have a higher affinity for phosphorylated SLR1 proteins. In terms of tissue distribution, widely expressed. Preferentially expressed in unopened flowers, shoot apices and elongation stem. Expressed at lower level in the leaf blades, leaf sheaths, roots and rachis.

It is found in the nucleus. The protein operates within protein modification; protein ubiquitination. Essential component of some SCF-type E3 ligase complex that positively regulates the gibberellin signaling pathway. Upon gibberellin treatment, the complex mediates the ubiquitination and subsequent degradation of DELLA protein SLR1, a repressor of the gibberellin pathway, leading to activate the pathway. This chain is F-box protein GID2 (GID2), found in Oryza sativa subsp. japonica (Rice).